We begin with the raw amino-acid sequence, 402 residues long: NADH dehydrogenase [ubiquinone] 1 alpha subcomplex subunit 9, mitochondrial (402 aa).

A mitochondrion-targeting transit peptide spans 1–43 (MQVVSRRLVQRPLVGGASIYSSSSLRSLYGVSNHLNGTDNCRY).

This sequence belongs to the complex I NDUFA9 subunit family. As to quaternary structure, complex I is composed of at least 49 different subunits. This a component of the hydrophobic protein fraction. It depends on FAD as a cofactor.

It is found in the mitochondrion matrix. In terms of biological role, accessory subunit of the mitochondrial membrane respiratory chain NADH dehydrogenase (Complex I), that is believed not to be involved in catalysis. Complex I functions in the transfer of electrons from NADH to the respiratory chain. The immediate electron acceptor for the enzyme is believed to be ubiquinone. This is NADH dehydrogenase [ubiquinone] 1 alpha subcomplex subunit 9, mitochondrial from Arabidopsis thaliana (Mouse-ear cress).